We begin with the raw amino-acid sequence, 438 residues long: Beta-1,3-galactosyl-O-glycosyl-glycoprotein beta-1,6-N-acetylglucosaminyltransferase 3 (438 aa).

At 1 to 6 (MVQWKR) the chain is on the cytoplasmic side. The helical; Signal-anchor for type II membrane protein transmembrane segment at 7–26 (LCQLHYLWALGCYMLLATVA) threads the bilayer. Over 27–438 (LKLSFRLKCD…RYKAIYGTEL (412 aa)) the chain is Lumenal. 4 cysteine pairs are disulfide-bonded: Cys-70–Cys-227, Cys-161–Cys-382, Cys-182–Cys-209, and Cys-391–Cys-423. Residue Asn-289 is glycosylated (N-linked (GlcNAc...) asparagine).

It belongs to the glycosyltransferase 14 family. N-glycosylated. As to expression, primarily expressed in mucus-secreting tissues. Expressed in colon, kidney, small intestine, trachea, and stomach, where mucin is produced.

The protein localises to the golgi apparatus membrane. The catalysed reaction is a 3-O-[beta-D-galactosyl-(1-&gt;3)-N-acetyl-alpha-D-galactosaminyl]-L-seryl-[protein] + UDP-N-acetyl-alpha-D-glucosamine = 3-O-{beta-D-galactosyl-(1-&gt;3)-[N-acetyl-beta-D-glucosaminyl-(1-&gt;6)]-N-acetyl-alpha-D-galactosaminyl}-L-seryl-[protein] + UDP + H(+). It carries out the reaction a 3-O-[beta-D-galactosyl-(1-&gt;3)-N-acetyl-alpha-D-galactosaminyl]-L-threonyl-[protein] + UDP-N-acetyl-alpha-D-glucosamine = a 3-O-{beta-D-galactosyl-(1-&gt;3)-[N-acetyl-beta-D-glucosaminyl-(1-&gt;6)]-N-acetyl-alpha-D-galactosaminyl}-L-threonyl-[protein] + UDP + H(+). It catalyses the reaction a beta-D-Gal-(1-&gt;4)-beta-D-GlcNAc-(1-&gt;3)-beta-D-Gal-(1-&gt;4)-beta-D-GlcNAc derivative + UDP-N-acetyl-alpha-D-glucosamine = a beta-D-Gal-(1-&gt;4)-beta-D-GlcNAc-(1-&gt;3)-[beta-D-GlcNAc-(1-&gt;6)]-beta-D-Gal-(1-&gt;4)-N-acetyl-beta-D-glucosaminyl derivative + UDP + H(+). The enzyme catalyses 3-O-[N-acetyl-beta-D-glucosaminyl-(1-&gt;3)-N-acetyl-alpha-D-galactosaminyl]-L-seryl-[protein] + UDP-N-acetyl-alpha-D-glucosamine = 3-O-[N-acetyl-beta-D-glucosaminyl-(1-&gt;3)-[N-acetyl-beta-D-glucosaminyl-(1-&gt;6)]-N-acetyl-alpha-D-galactosaminyl]-L-seryl-[protein] + UDP + H(+). The catalysed reaction is a 3-O-[N-acetyl-beta-D-glucosaminyl-(1-&gt;3)-N-acetyl-alpha-D-galactosaminyl]-L-threonyl-[protein] + UDP-N-acetyl-alpha-D-glucosamine = 3-O-[N-acetyl-beta-D-glucosaminyl-(1-&gt;3)-[N-acetyl-beta-D-glucosaminyl-(1-&gt;6)]-N-acetyl-alpha-D-galactosaminyl]-L-threonyl-[protein] + UDP + H(+). The protein operates within protein modification; protein glycosylation. In terms of biological role, glycosyltransferase that can synthesize all known mucin beta 6 N-acetylglucosaminides. Mediates core 2 and core 4 O-glycan branching, 2 important steps in mucin-type biosynthesis. Also has I-branching enzyme activity by converting linear into branched poly-N-acetyllactosaminoglycans, leading to introduce the blood group I antigen during embryonic development. The protein is Beta-1,3-galactosyl-O-glycosyl-glycoprotein beta-1,6-N-acetylglucosaminyltransferase 3 (GCNT3) of Homo sapiens (Human).